We begin with the raw amino-acid sequence, 256 residues long: MTQPLIIANTPFSSRLFTGTGKFPNSLIMQQALIESGSELATMALKRVDVSNPEDDILKPIMTAGINLLPNTSGAKNAREAIFAAQLAREALQTNWLKLEIHPDPKYLMPDPIETLKAAEELVRQGFIVLPYCHADPVLCKRLEEVGCAAVMPLGAPIGSNKGIVSRDFLEIIIDQAKVPVVVDAGIGAPSHAAFAMELGADAVLVNTAIAAARNPVAMATAFKLAVQSGRLAYENGLVSVSSQAVASSPLTAFLD.

Lys-98 serves as the catalytic Schiff-base intermediate with DXP. Residues Gly-159, 185 to 186 (AG), and 207 to 208 (NT) each bind 1-deoxy-D-xylulose 5-phosphate.

This sequence belongs to the ThiG family. As to quaternary structure, homotetramer. Forms heterodimers with either ThiH or ThiS.

It localises to the cytoplasm. It carries out the reaction [ThiS sulfur-carrier protein]-C-terminal-Gly-aminoethanethioate + 2-iminoacetate + 1-deoxy-D-xylulose 5-phosphate = [ThiS sulfur-carrier protein]-C-terminal Gly-Gly + 2-[(2R,5Z)-2-carboxy-4-methylthiazol-5(2H)-ylidene]ethyl phosphate + 2 H2O + H(+). It functions in the pathway cofactor biosynthesis; thiamine diphosphate biosynthesis. Functionally, catalyzes the rearrangement of 1-deoxy-D-xylulose 5-phosphate (DXP) to produce the thiazole phosphate moiety of thiamine. Sulfur is provided by the thiocarboxylate moiety of the carrier protein ThiS. In vitro, sulfur can be provided by H(2)S. This Aliivibrio salmonicida (strain LFI1238) (Vibrio salmonicida (strain LFI1238)) protein is Thiazole synthase.